A 657-amino-acid polypeptide reads, in one-letter code: Glycogen debranching enzyme (657 aa).

The active-site Nucleophile is Asp336. Glu371 functions as the Proton donor in the catalytic mechanism. Basic and acidic residues predominate over residues 458-467 (NEANGEENRD). The segment at 458–479 (NEANGEENRDGTNNNYSNNHGK) is disordered.

It belongs to the glycosyl hydrolase 13 family.

It catalyses the reaction Hydrolysis of (1-&gt;6)-alpha-D-glucosidic linkages to branches with degrees of polymerization of three or four glucose residues in limit dextrin.. Its pathway is glycan degradation; glycogen degradation. Its function is as follows. Removes maltotriose and maltotetraose chains that are attached by 1,6-alpha-linkage to the limit dextrin main chain, generating a debranched limit dextrin. The chain is Glycogen debranching enzyme from Escherichia coli O8 (strain IAI1).